Consider the following 1349-residue polypeptide: ABC multidrug transporter mdr1 (1349 aa).

The disordered stretch occupies residues 1-62 (MPAPETGASS…PDGKQKDHGK (62 aa)). A compositionally biased stretch (basic and acidic residues) spans 35 to 45 (DNEKPHDHHSL). Helical transmembrane passes span 108-128 (ILII…LPLF), 162-182 (YFVY…VGFI), 234-254 (KVGL…VAYV), and 257-277 (WKLA…MGGG). Positions 112–402 (LVSAICAIAA…VAPNGQAFTN (291 aa)) constitute an ABC transmembrane type-1 1 domain. Asn-308 is a glycosylation site (N-linked (GlcNAc...) asparagine). Helical transmembrane passes span 339 to 359 (ILGM…GLGF) and 371 to 391 (VNVG…FSLG). The 246-residue stretch at 437–682 (IEFRNVKHIY…KGTYYKLVEA (246 aa)) folds into the ABC transporter 1 domain. 472–479 (GPSGSGKS) is an ATP binding site. Helical transmembrane passes span 779 to 799 (MLIG…QAFL) and 828 to 848 (FFVV…AFAI). Residues 780–1069 (LIGLTFSFLA…VFSFAPDMGK (290 aa)) form the ABC transmembrane type-1 2 domain. Asn-878 and Asn-893 each carry an N-linked (GlcNAc...) asparagine glycan. The next 4 membrane-spanning stretches (helical) occupy residues 896–916 (GVSG…GAAM), 926–948 (LALV…FYML), 1016–1036 (ALVF…LGHH), and 1043–1063 (FFVC…VFSF). One can recognise an ABC transporter 2 domain in the interval 1104–1342 (IEFRDVHFRY…KGRYYELVNL (239 aa)). Asn-1126 carries an N-linked (GlcNAc...) asparagine glycan. ATP is bound at residue 1139-1146 (GPSGCGKS).

Belongs to the ABC transporter superfamily. ABCB family. Multidrug resistance exporter (TC 3.A.1.201) subfamily.

It is found in the cell membrane. It catalyses the reaction voriconazole(in) + ATP + H2O = voriconazole(out) + ADP + phosphate + H(+). In terms of biological role, pleiotropic ABC efflux transporter that may be involved in A.fumigatus adaptation to azoles such as vorizonazole. The protein is ABC multidrug transporter mdr1 of Aspergillus fumigatus (strain ATCC MYA-4609 / CBS 101355 / FGSC A1100 / Af293) (Neosartorya fumigata).